Here is a 595-residue protein sequence, read N- to C-terminus: Neuroepithelial cell-transforming gene 1 protein (595 aa).

Position 1 is an N-acetylmethionine (M1). The tract at residues 1–42 (MEPEPAAQKQPRPRRRSRRVSMLSEEPAAGLPADTPGPAANE) is disordered. The segment at 1–74 (MEPEPAAQKQ…LKRKRREKDD (74 aa)) is necessary for nuclear localization. The short motif at 12 to 19 (RPRRRSRR) is the Nuclear localization signal element. At S21 the chain carries Phosphoserine. The short motif at 66–72 (KRKRREK) is the Nuclear localization signal element. Phosphoserine is present on residues S100, S106, and S122. Residues 127-151 (GDHRSPASAQKSFSRSTVPTPTKRR) form a disordered region. A compositionally biased stretch (polar residues) spans 133–146 (ASAQKSFSRSTVPT). Positions 174–356 (KRQEAIYELS…QGVLSDINLK (183 aa)) constitute a DH domain. Residues 386–501 (VLLCHGELKN…WFNCIRAAIA (116 aa)) enclose the PH domain. A Phosphoserine modification is found at S508. Residues 555–595 (CGSSVQTVEDTRNMKAQRPQPGLRRARDKAQSGGKKKETLV) are disordered.

In terms of assembly, interacts with RHOA in its GTP- and GDP-bound states, and with CDC42 in its GTP-bound state. Interacts with the PDZ 1 domain of BAIAP1.

The protein localises to the cytoplasm. It localises to the nucleus. Functionally, acts as a guanine nucleotide exchange factor (GEF) for RhoA GTPase. May be involved in activation of the SAPK/JNK pathway. Stimulates genotoxic stress-induced RHOB activity in breast cancer cells leading to their cell death. The chain is Neuroepithelial cell-transforming gene 1 protein (Net1) from Mus musculus (Mouse).